We begin with the raw amino-acid sequence, 625 residues long: Phosphomethylpyrimidine synthase (625 aa).

Substrate is bound by residues Asn-230, Met-259, Tyr-288, His-324, 344-346 (SRG), 385-388 (DGLR), and Glu-424. His-428 is a Zn(2+) binding site. Tyr-451 lines the substrate pocket. His-492 is a binding site for Zn(2+). Residues Cys-572, Cys-575, and Cys-580 each contribute to the [4Fe-4S] cluster site.

It belongs to the ThiC family. Homodimer. Requires [4Fe-4S] cluster as cofactor.

It catalyses the reaction 5-amino-1-(5-phospho-beta-D-ribosyl)imidazole + S-adenosyl-L-methionine = 4-amino-2-methyl-5-(phosphooxymethyl)pyrimidine + CO + 5'-deoxyadenosine + formate + L-methionine + 3 H(+). Its pathway is cofactor biosynthesis; thiamine diphosphate biosynthesis. Its function is as follows. Catalyzes the synthesis of the hydroxymethylpyrimidine phosphate (HMP-P) moiety of thiamine from aminoimidazole ribotide (AIR) in a radical S-adenosyl-L-methionine (SAM)-dependent reaction. This Xanthomonas oryzae pv. oryzae (strain MAFF 311018) protein is Phosphomethylpyrimidine synthase.